Consider the following 234-residue polypeptide: (5-formylfuran-3-yl)methyl phosphate synthase (234 aa).

Lys-27 functions as the Schiff-base intermediate with substrate in the catalytic mechanism. Lys-85 (proton acceptor) is an active-site residue.

This sequence belongs to the MfnB family.

It catalyses the reaction 2 D-glyceraldehyde 3-phosphate = 4-(hydroxymethyl)-2-furancarboxaldehyde phosphate + phosphate + 2 H2O. Its pathway is cofactor biosynthesis; methanofuran biosynthesis. Catalyzes the formation of 4-(hydroxymethyl)-2-furancarboxaldehyde phosphate (4-HFC-P) from two molecules of glyceraldehyde-3-P (GA-3-P). The protein is (5-formylfuran-3-yl)methyl phosphate synthase of Methanosarcina barkeri (strain Fusaro / DSM 804).